The following is a 362-amino-acid chain: Chorismate synthase (362 aa).

Arg-47 serves as a coordination point for NADP(+). FMN contacts are provided by residues 124–126, Gly-286, 301–305, and Arg-327; these read RSS and KPTAT.

The protein belongs to the chorismate synthase family. In terms of assembly, homotetramer. FMNH2 serves as cofactor.

The enzyme catalyses 5-O-(1-carboxyvinyl)-3-phosphoshikimate = chorismate + phosphate. It functions in the pathway metabolic intermediate biosynthesis; chorismate biosynthesis; chorismate from D-erythrose 4-phosphate and phosphoenolpyruvate: step 7/7. In terms of biological role, catalyzes the anti-1,4-elimination of the C-3 phosphate and the C-6 proR hydrogen from 5-enolpyruvylshikimate-3-phosphate (EPSP) to yield chorismate, which is the branch point compound that serves as the starting substrate for the three terminal pathways of aromatic amino acid biosynthesis. This reaction introduces a second double bond into the aromatic ring system. The protein is Chorismate synthase of Synechococcus sp. (strain ATCC 27144 / PCC 6301 / SAUG 1402/1) (Anacystis nidulans).